The chain runs to 200 residues: Shikimate kinase (200 aa).

33-38 (GAGKST) provides a ligand contact to ATP. Ser-37 lines the Mg(2+) pocket. Asp-55, Arg-79, and Gly-101 together coordinate substrate. Arg-139 lines the ATP pocket. A substrate-binding site is contributed by Arg-158.

The protein belongs to the shikimate kinase family. As to quaternary structure, monomer. Requires Mg(2+) as cofactor.

It localises to the cytoplasm. It catalyses the reaction shikimate + ATP = 3-phosphoshikimate + ADP + H(+). It participates in metabolic intermediate biosynthesis; chorismate biosynthesis; chorismate from D-erythrose 4-phosphate and phosphoenolpyruvate: step 5/7. Catalyzes the specific phosphorylation of the 3-hydroxyl group of shikimic acid using ATP as a cosubstrate. The polypeptide is Shikimate kinase (Brucella abortus (strain S19)).